Here is a 407-residue protein sequence, read N- to C-terminus: Methylthioribose kinase (407 aa).

ATP contacts are provided by residues asparagine 40, lysine 57, and 111 to 113 (EDL). Position 229 (aspartate 229) interacts with substrate. Residue 246–248 (DAE) coordinates ATP. Arginine 344 lines the substrate pocket.

Belongs to the methylthioribose kinase family. In terms of assembly, homodimer.

It catalyses the reaction 5-(methylsulfanyl)-D-ribose + ATP = 5-(methylsulfanyl)-alpha-D-ribose 1-phosphate + ADP + H(+). The protein operates within amino-acid biosynthesis; L-methionine biosynthesis via salvage pathway; S-methyl-5-thio-alpha-D-ribose 1-phosphate from S-methyl-5'-thioadenosine (hydrolase route): step 2/2. Catalyzes the phosphorylation of methylthioribose into methylthioribose-1-phosphate. The protein is Methylthioribose kinase of Yersinia pseudotuberculosis serotype O:1b (strain IP 31758).